Here is a 695-residue protein sequence, read N- to C-terminus: Polyribonucleotide nucleotidyltransferase (695 aa).

Mg(2+)-binding residues include Asp-486 and Asp-492. The region spanning 553–612 (PRMIVFKINPEKIRDVIGKGGATIRALTEETGTTIDIVDDGTVKIFSADKADGQEAKRRV) is the KH domain. Positions 622 to 690 (GKIYEGRVSR…KQGRVRLSVK (69 aa)) constitute an S1 motif domain.

It belongs to the polyribonucleotide nucleotidyltransferase family. Component of the RNA degradosome, which is a multiprotein complex involved in RNA processing and mRNA degradation. Mg(2+) serves as cofactor.

The protein resides in the cytoplasm. The catalysed reaction is RNA(n+1) + phosphate = RNA(n) + a ribonucleoside 5'-diphosphate. Its function is as follows. Involved in mRNA degradation. Catalyzes the phosphorolysis of single-stranded polyribonucleotides processively in the 3'- to 5'-direction. This is Polyribonucleotide nucleotidyltransferase from Nitrosococcus oceani (strain ATCC 19707 / BCRC 17464 / JCM 30415 / NCIMB 11848 / C-107).